The primary structure comprises 415 residues: Serine/threonine-protein kinase H1 homolog (415 aa).

The disordered stretch occupies residues 1–70; it reads MGCMSSKLVP…SNRKVKKYRD (70 aa). Residues 41 to 50 show a composition bias toward basic and acidic residues; sequence GPRDPTKDPK. Positions 80–334 constitute a Protein kinase domain; it reads YDIKALIGRG…AADALKHQWL (255 aa). ATP is bound by residues 86–94 and Lys109; that span reads IGRGNFSKV. The Proton acceptor role is filled by Asp198. Polar residues predominate over residues 353-362; that stretch reads NLIHRQSTRA. A disordered region spans residues 353 to 415; that stretch reads NLIHRQSTRA…DVQADLASLG (63 aa). The segment covering 363-385 has biased composition (low complexity); sequence NSTKSAKSTRSTKSNKSNRSGRS. Positions 386–406 are enriched in basic and acidic residues; it reads LRSEHRRVMPDEIDELHRDPD.

This sequence belongs to the protein kinase superfamily. CAMK Ser/Thr protein kinase family.

It catalyses the reaction L-seryl-[protein] + ATP = O-phospho-L-seryl-[protein] + ADP + H(+). The catalysed reaction is L-threonyl-[protein] + ATP = O-phospho-L-threonyl-[protein] + ADP + H(+). The polypeptide is Serine/threonine-protein kinase H1 homolog (PSKH1) (Pinctada fucata (Akoya pearl oyster)).